We begin with the raw amino-acid sequence, 127 residues long: Small ribosomal subunit protein uS13 (127 aa).

Positions 93–127 (RQGLPVRGQRTRTNGRTRRGRRVTVAGKKKAPAKK) are disordered. Over residues 101-127 (QRTRTNGRTRRGRRVTVAGKKKAPAKK) the composition is skewed to basic residues.

The protein belongs to the universal ribosomal protein uS13 family. In terms of assembly, part of the 30S ribosomal subunit. Forms a loose heterodimer with protein S19. Forms two bridges to the 50S subunit in the 70S ribosome.

In terms of biological role, located at the top of the head of the 30S subunit, it contacts several helices of the 16S rRNA. In the 70S ribosome it contacts the 23S rRNA (bridge B1a) and protein L5 of the 50S subunit (bridge B1b), connecting the 2 subunits; these bridges are implicated in subunit movement. Contacts the tRNAs in the A and P-sites. The polypeptide is Small ribosomal subunit protein uS13 (Crocosphaera subtropica (strain ATCC 51142 / BH68) (Cyanothece sp. (strain ATCC 51142))).